Reading from the N-terminus, the 242-residue chain is Adenosylcobinamide-GDP ribazoletransferase (242 aa).

5 helical membrane-spanning segments follow: residues 31–51 (LLFY…LSTA), 52–72 (LMGA…VLLS), 109–129 (IAVV…VALI), 134–154 (GAAL…LFLT), and 188–208 (ILIG…CFIG).

Belongs to the CobS family. Mg(2+) serves as cofactor.

It is found in the cell inner membrane. It catalyses the reaction alpha-ribazole + adenosylcob(III)inamide-GDP = adenosylcob(III)alamin + GMP + H(+). The catalysed reaction is alpha-ribazole 5'-phosphate + adenosylcob(III)inamide-GDP = adenosylcob(III)alamin 5'-phosphate + GMP + H(+). Its pathway is cofactor biosynthesis; adenosylcobalamin biosynthesis; adenosylcobalamin from cob(II)yrinate a,c-diamide: step 7/7. Joins adenosylcobinamide-GDP and alpha-ribazole to generate adenosylcobalamin (Ado-cobalamin). Also synthesizes adenosylcobalamin 5'-phosphate from adenosylcobinamide-GDP and alpha-ribazole 5'-phosphate. This Pseudomonas fluorescens (strain SBW25) protein is Adenosylcobinamide-GDP ribazoletransferase.